The chain runs to 123 residues: Small ribosomal subunit protein uS13 (123 aa).

The segment at 93-123 (HRKGLPVRGQNTKNNARTRKGPAKAIAGKKK) is disordered. Basic residues predominate over residues 108–123 (ARTRKGPAKAIAGKKK).

Belongs to the universal ribosomal protein uS13 family. Part of the 30S ribosomal subunit. Forms a loose heterodimer with protein S19. Forms two bridges to the 50S subunit in the 70S ribosome.

Located at the top of the head of the 30S subunit, it contacts several helices of the 16S rRNA. In the 70S ribosome it contacts the 23S rRNA (bridge B1a) and protein L5 of the 50S subunit (bridge B1b), connecting the 2 subunits; these bridges are implicated in subunit movement. Contacts the tRNAs in the A and P-sites. The chain is Small ribosomal subunit protein uS13 from Leuconostoc mesenteroides subsp. mesenteroides (strain ATCC 8293 / DSM 20343 / BCRC 11652 / CCM 1803 / JCM 6124 / NCDO 523 / NBRC 100496 / NCIMB 8023 / NCTC 12954 / NRRL B-1118 / 37Y).